A 108-amino-acid chain; its full sequence is Nucleoid-associated protein PSPTO_3645 (108 aa).

Residues 85–96 are compositionally biased toward polar residues; it reads QASQDKTASMTA. The disordered stretch occupies residues 85–108; it reads QASQDKTASMTAGMQLPPGMKLPF.

The protein belongs to the YbaB/EbfC family. As to quaternary structure, homodimer.

The protein resides in the cytoplasm. Its subcellular location is the nucleoid. Binds to DNA and alters its conformation. May be involved in regulation of gene expression, nucleoid organization and DNA protection. The polypeptide is Nucleoid-associated protein PSPTO_3645 (Pseudomonas syringae pv. tomato (strain ATCC BAA-871 / DC3000)).